The primary structure comprises 332 residues: uncharacterized protein (332 aa).

An N-terminal signal peptide occupies residues 1–23 (MKRIPSLIIGLLLILATWHSVLA). The helical transmembrane segment at 231–251 (SFFLGMIVTLIILAPVILYLW) threads the bilayer.

The protein localises to the membrane. This is an uncharacterized protein from Pyrococcus horikoshii (strain ATCC 700860 / DSM 12428 / JCM 9974 / NBRC 100139 / OT-3).